The sequence spans 239 residues: Small ribosomal subunit protein uS3 (239 aa).

Residues 39 to 107 (VRQVLRKKMS…SVHINVIEVR (69 aa)) enclose the KH type-2 domain. Residues 214–239 (GQEKQDDGSRGDRNADRSSRRSREVR) are disordered. Basic and acidic residues predominate over residues 216 to 239 (EKQDDGSRGDRNADRSSRRSREVR).

This sequence belongs to the universal ribosomal protein uS3 family. In terms of assembly, part of the 30S ribosomal subunit. Forms a tight complex with proteins S10 and S14.

In terms of biological role, binds the lower part of the 30S subunit head. Binds mRNA in the 70S ribosome, positioning it for translation. The polypeptide is Small ribosomal subunit protein uS3 (Xylella fastidiosa (strain M12)).